The following is a 304-amino-acid chain: C-type lectin domain-containing protein 141 (304 aa).

The signal sequence occupies residues 1 to 19; it reads MRSSSTLLIAFGLFLASMS. Positions 29-100 are disordered; it reads GSGGHRPPSS…TTPEPTTTKV (72 aa). The segment covering 51–99 has biased composition (low complexity); that stretch reads TKPPKSTSTPSTSTSTPTTTTTTTTTTTTTPTTTTTTTTTTTPEPTTTK.

The protein is C-type lectin domain-containing protein 141 (clec-141) of Caenorhabditis elegans.